Here is a 210-residue protein sequence, read N- to C-terminus: 3 beta-hydroxysteroid dehydrogenase/Delta 5--&gt;4-isomerase (210 aa).

The active-site Proton acceptor is Tyr-29. Lys-33 is an NAD(+) binding site.

It belongs to the 3-beta-HSD family.

It catalyses the reaction a 3beta-hydroxy-Delta(5)-steroid + NAD(+) = a 3-oxo-Delta(5)-steroid + NADH + H(+). The enzyme catalyses a 3-oxo-Delta(5)-steroid = a 3-oxo-Delta(4)-steroid. It functions in the pathway lipid metabolism; steroid biosynthesis. Its function is as follows. Catalyzes the oxidative conversion of Delta(5)-ene-3-beta-hydroxy steroid, and the oxidative conversion of ketosteroids. The 3-beta-HSD enzymatic system plays a crucial role in the biosynthesis of all classes of hormonal steroids. During viral infection, steroid production contributes to virulence by inhibiting the host inflammatory response. The protein is 3 beta-hydroxysteroid dehydrogenase/Delta 5--&gt;4-isomerase (OPG174) of Variola virus (isolate Human/India/Ind3/1967) (VARV).